The sequence spans 603 residues: Protein regulator of cytokinesis 1 (603 aa).

The interval 1-341 (MRRSEVLADE…HLHDAEIVRL (341 aa)) is dimerization. Coiled-coil stretches lie at residues 34-65 (EQRL…RERL), 96-136 (ILQL…DILC), 211-246 (SLEN…IREL), 272-304 (RNAL…LAQF), and 383-463 (GNLL…AEML). The spectrin-fold stretch occupies residues 342–466 (RNYYDVHKEL…QTEAEMLYGS (125 aa)). Residues 447–459 (KQERQLKNKKQTE) show a composition bias toward basic and acidic residues. Residues 447-502 (KQERQLKNKKQTEAEMLYGSTPRTPSKRPGQTPKKSGKMNTTTMSSATPNSSIRPV) are disordered. The tract at residues 467-603 (TPRTPSKRPG…RILNSTNIQS (137 aa)) is unstructured, Arg/Lys rich. Threonine 470 carries the post-translational modification Phosphothreonine; by CDK1. A compositionally biased stretch (polar residues) spans 484–499 (KMNTTTMSSATPNSSI). Serine 510 and serine 568 each carry phosphoserine. The residue at position 575 (threonine 575) is a Phosphothreonine. Positions 583 to 603 (LSKASRSDATSRILNSTNIQS) are disordered. Positions 589–603 (SDATSRILNSTNIQS) are enriched in polar residues. Phosphothreonine; by PLK1 is present on threonine 599.

It belongs to the MAP65/ASE1 family. As to quaternary structure, homodimer. Interacts with the C-terminal Rho-GAP domain and the basic region of RACGAP1. The interaction with RACGAP1 inhibits its GAP activity towards CDC42 in vitro, which may be required for maintaining normal spindle morphology. Interacts (via N-terminus) with the C-terminus of CENPE (via C-terminus); the interaction occurs during late mitosis. Interacts (via N-terminus) with KIF4A (via C-terminus); the interaction is required for the progression of mitosis. Interacts (via N-terminus) with KIF23 (via C-terminus); the interaction occurs during late mitosis. Interacts with KIF14 and KIF20A. Interacts with PLK1. Interacts with KIF20B. Interacts with CCDC66. Post-translationally, phosphorylation by CDK1 in early mitosis holds PRC1 in an inactive monomeric state, during the metaphase to anaphase transition, PRC1 is dephosphorylated, promoting interaction with KIF4A, which then translocates PRC1 along mitotic spindles to the plus ends of antiparallel interdigitating microtubules. Dephosphorylation also promotes MT-bundling activity by allowing dimerization. Phosphorylation by CDK1 prevents PLK1-binding: upon degradation of CDK1 at anaphase and dephosphorylation, it is then phosphorylated by PLK1, leading to cytokinesis.

The protein resides in the nucleus. It localises to the cytoplasm. The protein localises to the cytoskeleton. Its subcellular location is the spindle pole. It is found in the midbody. Key regulator of cytokinesis that cross-links antiparrallel microtubules at an average distance of 35 nM. Essential for controlling the spatiotemporal formation of the midzone and successful cytokinesis. Required for KIF14 localization to the central spindle and midbody. Required to recruit PLK1 to the spindle. Stimulates PLK1 phosphorylation of RACGAP1 to allow recruitment of ECT2 to the central spindle. Acts as an oncogene for promoting bladder cancer cells proliferation, apoptosis inhibition and carcinogenic progression. This is Protein regulator of cytokinesis 1 from Mus musculus (Mouse).